Reading from the N-terminus, the 304-residue chain is Aspartate carbamoyltransferase catalytic subunit (304 aa).

2 residues coordinate carbamoyl phosphate: Arg54 and Thr55. Residue Lys83 participates in L-aspartate binding. Positions 104, 132, and 135 each coordinate carbamoyl phosphate. The L-aspartate site is built by Arg165 and Arg226. Residues Leu265 and Pro266 each contribute to the carbamoyl phosphate site.

It belongs to the aspartate/ornithine carbamoyltransferase superfamily. ATCase family. In terms of assembly, heterooligomer of catalytic and regulatory chains.

The enzyme catalyses carbamoyl phosphate + L-aspartate = N-carbamoyl-L-aspartate + phosphate + H(+). The protein operates within pyrimidine metabolism; UMP biosynthesis via de novo pathway; (S)-dihydroorotate from bicarbonate: step 2/3. Functionally, catalyzes the condensation of carbamoyl phosphate and aspartate to form carbamoyl aspartate and inorganic phosphate, the committed step in the de novo pyrimidine nucleotide biosynthesis pathway. This chain is Aspartate carbamoyltransferase catalytic subunit, found in Pyrobaculum neutrophilum (strain DSM 2338 / JCM 9278 / NBRC 100436 / V24Sta) (Thermoproteus neutrophilus).